We begin with the raw amino-acid sequence, 205 residues long: Small ribosomal subunit protein uS4 (205 aa).

A compositionally biased stretch (basic and acidic residues) spans 1 to 16; it reads MSKRESSKYKIDRRMG. A disordered region spans residues 1 to 46; that stretch reads MSKRESSKYKIDRRMGENIWGRPKSPVNRREYGPGQHGQRRKSKLS. Residues 94 to 157 enclose the S4 RNA-binding domain; that stretch reads SRLDAIVYRA…KQLVTVLEAV (64 aa).

This sequence belongs to the universal ribosomal protein uS4 family. Part of the 30S ribosomal subunit. Contacts protein S5. The interaction surface between S4 and S5 is involved in control of translational fidelity.

In terms of biological role, one of the primary rRNA binding proteins, it binds directly to 16S rRNA where it nucleates assembly of the body of the 30S subunit. With S5 and S12 plays an important role in translational accuracy. The chain is Small ribosomal subunit protein uS4 from Sinorhizobium medicae (strain WSM419) (Ensifer medicae).